Here is a 192-residue protein sequence, read N- to C-terminus: MAPLGGAPRLVLLFSGKRKSGKDFVTEALQSRLGADVCAVLRLSGPLKEQYAQEHGLNFQRLLDTSTYKEAFRKDMIRWGEEKRQADPGFFCRKIVEGISQPIWLVSDTRRVSDIQWFREAYGAVTQTVRVVALEQSRQQRGWVFTPGVDDAESECGLDNFGDFDWVIENHGVEQRLEEQLENLIEFIRSRL.

ATP is bound by residues K17 to D23 and R141. Substrate is bound at residue N170. Residues H171, R176, and Q180 each coordinate ATP.

In terms of assembly, monomer. In terms of tissue distribution, heart, liver, skeletal muscle, kidney, and pancreas. Lower level in brain, placenta and lung.

Its subcellular location is the cytoplasm. The protein localises to the cytosol. It catalyses the reaction (R)-5-phosphomevalonate + ATP = (R)-5-diphosphomevalonate + ADP. Its pathway is isoprenoid biosynthesis; isopentenyl diphosphate biosynthesis via mevalonate pathway; isopentenyl diphosphate from (R)-mevalonate: step 2/3. In terms of biological role, catalyzes the reversible ATP-dependent phosphorylation of mevalonate 5-phosphate to produce mevalonate diphosphate and ADP, a key step in the mevalonic acid mediated biosynthesis of isopentenyl diphosphate and other polyisoprenoid metabolites. The protein is Phosphomevalonate kinase (PMVK) of Homo sapiens (Human).